The primary structure comprises 379 residues: Centrosomal protein 43 (379 aa).

The region spanning 70–102 (DGRLVASLVAEFLQFFNLDFTLAVFQPETSTLQ) is the LisH domain. The segment at 139-196 (EKGPTTGEGALDLSDVHPPPKSPEGKTSAQTTPSKKANNEANQSDTSVSLSEPKSKSS) is disordered. T143 carries the phosphothreonine modification. 2 positions are modified to phosphoserine: S152 and S160. The segment covering 163–184 (GKTSAQTTPSKKANNEANQSDT) has biased composition (polar residues). Phosphothreonine is present on T170. A Phosphoserine modification is found at S182. Residues 185–196 (SVSLSEPKSKSS) show a composition bias toward low complexity. T214 is subject to Phosphothreonine. A disordered region spans residues 216–288 (DGKDKAGLCP…APSLKDSESK (73 aa)). Over residues 225-236 (PDEDDMEGDSFF) the composition is skewed to acidic residues. Residues 239 to 255 (PIPKPEKTYGLRSEPRK) are compositionally biased toward basic and acidic residues. Residues 266–282 (APPLKSGLSSLAGAPSL) show a composition bias toward low complexity. 2 positions are modified to phosphoserine: S281 and S306. Y317 carries the phosphotyrosine modification.

The protein belongs to the CEP43 family. As to quaternary structure, homodimer. Part of a ternary complex that contains CEP350, CEP43 and MAPRE1. Interacts directly with CEP350 and MAPRE1. Interacts with CEP19. Interacts (via N-terminus) with CEP350 (via C-terminus).

It is found in the cytoplasm. The protein localises to the cytoskeleton. The protein resides in the microtubule organizing center. It localises to the centrosome. Its subcellular location is the centriole. It is found in the cilium basal body. Required for anchoring microtubules to the centrosomes. Required for ciliation. In Macaca fascicularis (Crab-eating macaque), this protein is Centrosomal protein 43 (CEP43).